The sequence spans 387 residues: Acyl-[acyl-carrier-protein] 6-desaturase (387 aa).

The transit peptide at 1 to 29 directs the protein to the chloroplast; the sequence is MALVFKSIGAHKTPPCTLNLASPALYHTR. Residues glutamate 131, glutamate 169, histidine 172, glutamate 222, glutamate 255, and histidine 258 each contribute to the Fe cation site.

Belongs to the fatty acid desaturase type 2 family. It depends on Fe(2+) as a cofactor.

The protein resides in the plastid. It localises to the chloroplast. It catalyses the reaction hexadecanoyl-[ACP] + 2 reduced [2Fe-2S]-[ferredoxin] + O2 + 2 H(+) = (6Z)-hexadecenoyl-[ACP] + 2 oxidized [2Fe-2S]-[ferredoxin] + 2 H2O. It participates in lipid metabolism; fatty acid metabolism. Inhibited by KCN or H(2)O(2). Delta(6) fatty acid desaturase introducing a cis double bond at carbon 6 of palmitoyl-[acyl-carrier protein](16:0-ACP), producing 16:1(6Z)-ACP. No activity with the coenzyme A ester of the fatty acid. The position of the double bond is determined by its distance from the carboxyl end of the fatty acid. Low activity with several saturated acyl-[acyl-carrier protein]s, including 14:0-ACP and 18:0-ACP. Requires reduced ferredoxin for detectable in vitro activity. This is Acyl-[acyl-carrier-protein] 6-desaturase from Thunbergia alata (Black-eyed Susan vine).